The chain runs to 210 residues: Redox-sensing transcriptional repressor Rex (210 aa).

Residues 16–55 (IYSRYLRQLIEEGVETVSSGEIAAGVGVSSAQVRKDLAYF) constitute a DNA-binding region (H-T-H motif). An NAD(+)-binding site is contributed by 90–95 (GAGKLG).

The protein belongs to the transcriptional regulatory Rex family. In terms of assembly, homodimer.

Its subcellular location is the cytoplasm. Modulates transcription in response to changes in cellular NADH/NAD(+) redox state. The polypeptide is Redox-sensing transcriptional repressor Rex (Syntrophomonas wolfei subsp. wolfei (strain DSM 2245B / Goettingen)).